Reading from the N-terminus, the 369-residue chain is MRDSPDEVSVDELVNMAVAGGIDEGTALDALQGKLDPYKVMRAAHEARLKIVGEHVTFVVNRNINFTNVCINRCRFCAFRRDPDDPDAYRMTPEEVGERAAEARDAGATEVCLQGGLHPEATFEYYLEMLDEIKSQAPDIHVHGYSPMEVKYCAKLAGEDIEDVLRELKRAGLDSMPGTAAEIFSPEVRKRLCPDKLEADEWEHIIRIAHELGIPTTCTMMYGHIDSPRDWIDHMKRLRGIQEDTGGFTEFVPLSFVHSNAPIYRRGGARPGVSGMTDVLVHAVARLYFGPLIPNIQASWVKLGVKLAQMTLHAGANDLGGTLMEENISREAGATEGEQLEPEEIVEIIREAGFTPVQRTTLYEPVKVY.

Residues 56–292 (VTFVVNRNIN…AVARLYFGPL (237 aa)) enclose the Radical SAM core domain. The [4Fe-4S] cluster site is built by Cys-70, Cys-74, and Cys-77.

Belongs to the radical SAM superfamily. CofH family. Consists of two subunits, CofG and CofH. [4Fe-4S] cluster serves as cofactor.

The enzyme catalyses 5-amino-6-(D-ribitylamino)uracil + L-tyrosine + S-adenosyl-L-methionine = 5-amino-5-(4-hydroxybenzyl)-6-(D-ribitylimino)-5,6-dihydrouracil + 2-iminoacetate + 5'-deoxyadenosine + L-methionine + H(+). Its pathway is cofactor biosynthesis; coenzyme F0 biosynthesis. Functionally, catalyzes the radical-mediated synthesis of 5-amino-5-(4-hydroxybenzyl)-6-(D-ribitylimino)-5,6-dihydrouracil from 5-amino-6-(D-ribitylamino)uracil and L-tyrosine. The polypeptide is 5-amino-6-(D-ribitylamino)uracil--L-tyrosine 4-hydroxyphenyl transferase (Methanopyrus kandleri (strain AV19 / DSM 6324 / JCM 9639 / NBRC 100938)).